The following is a 72-amino-acid chain: UPF0426 protein asl4034 (72 aa).

The protein belongs to the UPF0426 family.

The sequence is that of UPF0426 protein asl4034 from Nostoc sp. (strain PCC 7120 / SAG 25.82 / UTEX 2576).